The sequence spans 214 residues: Transmembrane emp24 domain-containing protein p24delta9 (214 aa).

Positions 1–24 (MFLRSLNLCTILLFLAISSQVSQS) are cleaved as a signal peptide. Residues 25-181 (LHFELQSGRT…QNLNRATNSK (157 aa)) are Lumenal-facing. The GOLD domain occupies 34 to 149 (TKCISEDIKS…VEVMEFDVKR (116 aa)). Positions 164 to 177 (LREREEEMQNLNRA) form a coiled coil. Residue R167 is modified to Omega-N-methylated arginine. The helical transmembrane segment at 182 to 202 (MAWLSFLSLFVCLGVAGMQFV) threads the bilayer. The Cytoplasmic portion of the chain corresponds to 203-214 (HLKTFFEKKKVI). The short motif at 207–208 (FF) is the COPII vesicle coat-binding element. The COPI vesicle coat-binding motif lies at 207–214 (FFEKKKVI).

It belongs to the EMP24/GP25L family. As to quaternary structure, probably oligomerizes with other members of the EMP24/GP25L family. Associates with the COPI vesicle coat (coatomer). Associates with the COPII vesicle coat (coatomer).

The protein localises to the endoplasmic reticulum membrane. It localises to the golgi apparatus. It is found in the cis-Golgi network membrane. Its subcellular location is the golgi stack membrane. Involved in vesicular protein trafficking. Mainly functions in the early secretory pathway. Thought to act as cargo receptor at the lumenal side for incorporation of secretory cargo molecules into transport vesicles and to be involved in vesicle coat formation at the cytoplasmic side. This Arabidopsis thaliana (Mouse-ear cress) protein is Transmembrane emp24 domain-containing protein p24delta9.